The following is a 332-amino-acid chain: Ubiquinol oxidase 1a, mitochondrial (332 aa).

Residues 1–54 constitute a mitochondrion transit peptide; it reads MSSRMAGSAILRHVGGVRLFTASATSPAAAAAAAARPFLAGGEAVPGVWGLRLM. A helical membrane pass occupies residues 157 to 177; that stretch reads AMMLETVAAVPGMVGGMLLHL. Residues E161, E200, and H203 each contribute to the Fe cation site. The helical transmembrane segment at 219-239 threads the bilayer; the sequence is ALVITVQGVFFNAYFLGYLLS. Residues E251, E302, and H305 each contribute to the Fe cation site.

This sequence belongs to the alternative oxidase family. As to quaternary structure, homodimer; disulfide-linked. Requires Fe cation as cofactor. Expressed in roots, leaf sheaths and leaf blades.

Its subcellular location is the mitochondrion inner membrane. The catalysed reaction is 2 a ubiquinol + O2 = 2 a ubiquinone + 2 H2O. Catalyzes the cyanide-resistant oxidation of ubiquinol and the reduction of molecular oxygen to water, but does not translocate protons and consequently is not linked to oxidative phosphorylation. May increase respiration when the cytochrome respiratory pathway is restricted, or in response to low temperatures. The protein is Ubiquinol oxidase 1a, mitochondrial of Oryza sativa subsp. japonica (Rice).